Here is a 160-residue protein sequence, read N- to C-terminus: UPF0178 protein PA14_69280 (160 aa).

Belongs to the UPF0178 family.

This is UPF0178 protein PA14_69280 from Pseudomonas aeruginosa (strain UCBPP-PA14).